A 512-amino-acid polypeptide reads, in one-letter code: PTS system mannitol-specific EIICB component (512 aa).

The Cytoplasmic portion of the chain corresponds to 1 to 28 (MSQTEEKKGIGRRVQAFGSFLSSMIMPN). A PTS EIIC type-2 domain is found at 17 to 349 (FGSFLSSMIM…MKFTREPKQD (333 aa)). Residues 29-50 (IGAFIAWGFIAAIFIDNGWLPN) traverse the membrane as a helical segment. At 51-54 (KDLA) the chain is on the extracellular side. The helical transmembrane segment at 55–75 (TLAGPMITYLIPLLIAFSGGR) threads the bilayer. At 76–139 (LIYDLRGGII…QGFEMLFNNF (64 aa)) the chain is on the cytoplasmic side. The helical transmembrane segment at 140 to 161 (SAGILGFIMTIAGFKILAPLMK) threads the bilayer. Topologically, residues 162–170 (FIMHILSVA) are extracellular. The helical transmembrane segment at 171-191 (VEALVHAHLLPLVSILVEPAK) threads the bilayer. Topologically, residues 192 to 278 (IVFLNNAINH…VLMRPLLFIA (87 aa)) are cytoplasmic. The chain crosses the membrane as a helical span at residues 279-298 (VILGGMTGVATYQATGFGFK). Residues 299-318 (SPASPGSFIVYCLNAPRGEF) are Extracellular-facing. A helical membrane pass occupies residues 319-340 (LHMLLGVFLAALVSFVVAALIM). Topologically, residues 341–512 (KFTREPKQDL…LNNLKKDDQA (172 aa)) are cytoplasmic. Positions 355–402 (AQMENTKGKKSSVASKLVSSDKNVNTEENASGNVSETSSSDDDPEALL) are disordered. Low complexity predominate over residues 365-376 (SSVASKLVSSDK). Residues 380-392 (TEENASGNVSETS) are compositionally biased toward polar residues. Residues 419 to 512 (NHVIFACDAG…LNNLKKDDQA (94 aa)) form the PTS EIIB type-2 domain. The active-site Phosphocysteine intermediate; for EIIB activity is C425. C425 is subject to Phosphocysteine; by EIIA.

In terms of assembly, homodimer.

The protein localises to the cell membrane. It carries out the reaction D-mannitol(out) + N(pros)-phospho-L-histidyl-[protein] = D-mannitol 1-phosphate(in) + L-histidyl-[protein]. Its function is as follows. The phosphoenolpyruvate-dependent sugar phosphotransferase system (sugar PTS), a major carbohydrate active transport system, catalyzes the phosphorylation of incoming sugar substrates concomitantly with their translocation across the cell membrane. The enzyme II CmtAB PTS system is involved in D-mannitol transport. The sequence is that of PTS system mannitol-specific EIICB component (mtlA) from Staphylococcus aureus (strain Mu50 / ATCC 700699).